The sequence spans 209 residues: Ribosomal RNA small subunit methyltransferase G (209 aa).

Residues G71, F76, 122-123 (AE), and R135 contribute to the S-adenosyl-L-methionine site.

This sequence belongs to the methyltransferase superfamily. RNA methyltransferase RsmG family.

Its subcellular location is the cytoplasm. Its function is as follows. Specifically methylates the N7 position of a guanine in 16S rRNA. The protein is Ribosomal RNA small subunit methyltransferase G of Phocaeicola vulgatus (strain ATCC 8482 / DSM 1447 / JCM 5826 / CCUG 4940 / NBRC 14291 / NCTC 11154) (Bacteroides vulgatus).